Reading from the N-terminus, the 158-residue chain is Phosphopantetheine adenylyltransferase (158 aa).

Thr-9 is a substrate binding site. ATP is bound by residues Thr-9 to Phe-10 and His-17. 3 residues coordinate substrate: Lys-41, Leu-73, and Arg-87. ATP-binding positions include Gly-88–Arg-90, Glu-98, and Trp-123–Thr-129.

This sequence belongs to the bacterial CoaD family. In terms of assembly, homohexamer. It depends on Mg(2+) as a cofactor.

It is found in the cytoplasm. It carries out the reaction (R)-4'-phosphopantetheine + ATP + H(+) = 3'-dephospho-CoA + diphosphate. It functions in the pathway cofactor biosynthesis; coenzyme A biosynthesis; CoA from (R)-pantothenate: step 4/5. In terms of biological role, reversibly transfers an adenylyl group from ATP to 4'-phosphopantetheine, yielding dephospho-CoA (dPCoA) and pyrophosphate. This is Phosphopantetheine adenylyltransferase from Histophilus somni (strain 129Pt) (Haemophilus somnus).